Consider the following 417-residue polypeptide: 4-hydroxy-3-methylbut-2-en-1-yl diphosphate synthase (flavodoxin) (417 aa).

[4Fe-4S] cluster contacts are provided by Cys307, Cys310, Cys353, and Glu360.

This sequence belongs to the IspG family. It depends on [4Fe-4S] cluster as a cofactor.

It catalyses the reaction (2E)-4-hydroxy-3-methylbut-2-enyl diphosphate + oxidized [flavodoxin] + H2O + 2 H(+) = 2-C-methyl-D-erythritol 2,4-cyclic diphosphate + reduced [flavodoxin]. It functions in the pathway isoprenoid biosynthesis; isopentenyl diphosphate biosynthesis via DXP pathway; isopentenyl diphosphate from 1-deoxy-D-xylulose 5-phosphate: step 5/6. Functionally, converts 2C-methyl-D-erythritol 2,4-cyclodiphosphate (ME-2,4cPP) into 1-hydroxy-2-methyl-2-(E)-butenyl 4-diphosphate. This is 4-hydroxy-3-methylbut-2-en-1-yl diphosphate synthase (flavodoxin) from Xylella fastidiosa (strain 9a5c).